A 359-amino-acid chain; its full sequence is MIAAQAKLVYQLNKYYSERCQARKGAIAKTIREVCKVVSDVLKEVEVQEPRFISSLTEIDARFEGLEVVAPTEFEVVLYLNQMGVFNFVDDGSLPGCAVLKLSDGRKRSMSLWVEFITASGYLSARKIRSRFQTLVAQAVDKCSYRDVVKMIADTSEVKLRIRERYIVQITPAFKCTGIWPRSAAQWPLPHIPWPGPNRVAEVKAEGFNLLSKECYSLTGKQSSAESDAWVVHFAEAENRLLLGGCRGKCLSVLKTLRDRHLELPGQPLNNYHMKTLLLYECEKHPRETDWDEACLGDRLNGILLQLISCLQCRRCPHYFLPNLDLFQGKPHSALESAAKQTWRLAREILTNPKSLDKL.

This sequence belongs to the mab-21 family.

It is found in the nucleus. The protein resides in the cytoplasm. Its function is as follows. Required for several aspects of embryonic development including normal development of the eye. The chain is Protein mab-21-like 2-B (mab21l2-b) from Xenopus laevis (African clawed frog).